The chain runs to 716 residues: Protein Hook homolog 2 (716 aa).

Residues M1–S161 form a required for localization to the centrosome and induction of aggresome formation region. A sufficient for interaction with microtubules region spans residues M1–Q546. The 117-residue stretch at A6–A122 folds into the Calponin-homology (CH) domain. S163 is modified (phosphoserine). 2 coiled-coil regions span residues D188–Q427 and A455–A605. Residues D533–H716 form a required for localization to the centrosome and induction of aggresome formation region. The interval D582–H716 is sufficient for interaction with CNTRL.

Belongs to the hook family. Self-associates. Component of the FTS/Hook/FHIP complex (FHF complex), composed of AKTIP/FTS, FHIP1B, and one or more members of the Hook family of proteins HOOK1, HOOK2, and HOOK3. May interact directly with AKTIP/FTS, HOOK1 and HOOK3. Associates with several subunits of the homotypic vesicular sorting complex (the HOPS complex) including VPS16 and VPS41; these interactions may be indirect. Interacts with CNTRL. Interacts with microtubules. Interacts with ZC3H14. Interacts with LRGUK (via guanylate kinase-like domain). Interacts with CCDC181. Interacts with AP4M1; the interaction is direct, mediates the interaction between FTS-Hook-FHIP (FHF) complex and AP-4 and the perinuclear distribution of AP-4. In terms of tissue distribution, expressed in brain, cerebellum, kidney, liver and heart, with highest levels in heart and kidney (at protein level).

Its subcellular location is the cytoplasm. The protein localises to the cytoskeleton. It is found in the microtubule organizing center. The protein resides in the centrosome. It localises to the golgi apparatus. Its subcellular location is the trans-Golgi network. Functionally, component of the FTS/Hook/FHIP complex (FHF complex). The FHF complex may function to promote vesicle trafficking and/or fusion via the homotypic vesicular protein sorting complex (the HOPS complex). Contributes to the establishment and maintenance of centrosome function. May function in the positioning or formation of aggresomes, which are pericentriolar accumulations of misfolded proteins, proteasomes and chaperones. FHF complex promotes the distribution of AP-4 complex to the perinuclear area of the cell. This chain is Protein Hook homolog 2 (Hook2), found in Mus musculus (Mouse).